A 483-amino-acid chain; its full sequence is Glutathione reductase (483 aa).

N-acetylmethionine is present on methionine 1. Leucine 2 carries the N-acetylserine modification. FAD contacts are provided by serine 33 and glycine 34. Serine 33 provides a ligand contact to glutathione. Arginine 40 contributes to the glutathione binding site. Glutamate 53, threonine 60, cysteine 61, and lysine 69 together coordinate FAD. A disulfide bond links cysteine 61 and cysteine 66. Position 123 (tyrosine 123) interacts with glutathione. Alanine 139 is an FAD binding site. Alanine 205, isoleucine 208, glutamate 211, arginine 228, and arginine 234 together coordinate NADP(+). Threonine 243 lines the glutathione pocket. Asparagine 278 carries N-linked (GlcNAc...) asparagine glycosylation. Position 294 (glycine 294) interacts with NADP(+). FAD is bound at residue aspartate 334. Glutamate 340 is an NADP(+) binding site. Threonine 342 contributes to the FAD binding site. Arginine 350 contributes to the glutathione binding site. An NADP(+)-binding site is contributed by valine 375. Glutathione is bound at residue lysine 425. Histidine 472 contributes to the FAD binding site. Histidine 472 acts as the Proton acceptor in catalysis.

Belongs to the class-I pyridine nucleotide-disulfide oxidoreductase family. Homodimer. It depends on FAD as a cofactor.

It is found in the cytoplasm. The protein localises to the nucleus. The protein resides in the mitochondrion. Its subcellular location is the peroxisome. The enzyme catalyses 2 glutathione + NADP(+) = glutathione disulfide + NADPH + H(+). Functionally, catalyzes the reduction of glutathione disulfide (GSSG) to reduced glutathione (GSH). Constitutes the major mechanism to maintain a high GSH:GSSG ratio in the cytosol. This chain is Glutathione reductase, found in Saccharomyces cerevisiae (strain ATCC 204508 / S288c) (Baker's yeast).